Consider the following 124-residue polypeptide: Conotoxin Cl14.12 (124 aa).

A signal peptide spans 1 to 17 (MKVAVVLLVSLLAVTYA). Residues 18–74 (LPEKRIFFGGIVDKVKDTFTKIFNKAKETFDKITDGFDVDFDEVVDKLIAQIHSTPT) constitute a propeptide that is removed on maturation.

In terms of processing, contains 2 disulfide bond. As to expression, expressed by the venom duct.

The protein localises to the secreted. The protein is Conotoxin Cl14.12 of Californiconus californicus (California cone).